Here is a 277-residue protein sequence, read N- to C-terminus: Small ribosomal subunit protein uS2 (277 aa).

Residues 226–277 form a disordered region; it reads GQQARADRGEDLGAAVEPVAEPALVEEAAAPVTEDEQVPAEAAAETERQSDA. Residues 239 to 257 are compositionally biased toward low complexity; the sequence is AAVEPVAEPALVEEAAAPV.

It belongs to the universal ribosomal protein uS2 family.

This chain is Small ribosomal subunit protein uS2, found in Sphingopyxis alaskensis (strain DSM 13593 / LMG 18877 / RB2256) (Sphingomonas alaskensis).